The chain runs to 148 residues: Methylglyoxal synthase (148 aa).

An MGS-like domain is found at valine 4 to aspartate 148. Substrate contacts are provided by residues histidine 17, lysine 21, threonine 43–threonine 46, and serine 63–glycine 64. The Proton donor/acceptor role is filled by aspartate 69. Residue histidine 96 coordinates substrate.

Belongs to the methylglyoxal synthase family.

The catalysed reaction is dihydroxyacetone phosphate = methylglyoxal + phosphate. Catalyzes the formation of methylglyoxal from dihydroxyacetone phosphate. This Leptospira interrogans serogroup Icterohaemorrhagiae serovar copenhageni (strain Fiocruz L1-130) protein is Methylglyoxal synthase.